A 1714-amino-acid polypeptide reads, in one-letter code: Bifunctional glutamate/proline--tRNA ligase (1714 aa).

The interval 166–191 (DAKVKRSPQSSKEQTPAKTGERKQEG) is disordered. Residues 170–754 (KRSPQSSKEQ…ASELDSQISQ (585 aa)) form a glutamate--tRNA ligase region. Over residues 172-182 (SPQSSKEQTPA) the composition is skewed to polar residues. The short motif at 209 to 220 (PPEASGYLHIGH) is the 'HIGH' region element. Positions 438-442 (VLSKR) match the 'KMSKS' region motif. Disordered stretches follow at residues 718-754 (PTSGLKVNAPDAKATKKASSPVSSSGQASELDSQISQ), 791-817 (GKDWKPGQTSASSAPVPAASSSSANDA), and 943-962 (GTTAPAPAAAPVKVKQEKNP). Composition is skewed to low complexity over residues 734–746 (KASSPVSSSGQAS) and 800–817 (SASSAPVPAASSSSANDA). 5 WHEP-TRS domains span residues 744 to 800 (QASE…GQTS), 816 to 872 (DAVS…GTVP), 890 to 946 (SVAQ…GTTA), 969 to 1025 (TVNT…GTVA), and 1044 to 1100 (DVGS…DAKS). Positions 755–1201 (QGDLVRDLKS…KPAKPVKKEP (447 aa)) are 6 X 57 AA approximate repeats. Disordered stretches follow at residues 1093–1119 (DWTPDAKSEPAVVKKEASPVSMASPAK) and 1168–1210 (FPVA…GAVK). A compositionally biased stretch (basic and acidic residues) spans 1094–1109 (WTPDAKSEPAVVKKEA). A Phosphoserine modification is found at Ser1110. Residues 1118–1174 (AKDELTQEINAQGEKVRAAKGNKAAKEVIDAEVAKLLALKAKYKEVTGTDFPVAGRG) enclose the WHEP-TRS 6 domain. Residues 1172-1181 (GRGGGGGGGS) are compositionally biased toward gly residues. A proline--tRNA ligase region spans residues 1207–1714 (GAVKKQTRLG…KFYTLFGRSY (508 aa)). L-proline contacts are provided by residues 1322–1324 (TSE) and Arg1353. Residues Arg1353, Glu1355, Arg1364, Thr1365, Gln1438, and Thr1441 each coordinate ATP. Gln1438 provides a ligand contact to Mg(2+). His1443 provides a ligand contact to L-proline. 2 residues coordinate ATP: Thr1476 and Arg1478. Residues Cys1648, Cys1653, and Cys1695 each coordinate Zn(2+).

The protein in the N-terminal section; belongs to the class-I aminoacyl-tRNA synthetase family. Glutamate--tRNA ligase type 2 subfamily. It in the C-terminal section; belongs to the class-II aminoacyl-tRNA synthetase family. In terms of assembly, component of the multisynthetase complex which is comprised of a bifunctional glutamyl-prolyl-tRNA synthetase, the monospecific isoleucyl, leucyl, glutaminyl, methionyl, lysyl, arginyl, and aspartyl-tRNA synthetases as well as three auxiliary proteins, p18, p48 and p43.

It carries out the reaction tRNA(Glu) + L-glutamate + ATP = L-glutamyl-tRNA(Glu) + AMP + diphosphate. It catalyses the reaction tRNA(Pro) + L-proline + ATP = L-prolyl-tRNA(Pro) + AMP + diphosphate. Its function is as follows. Catalyzes the attachment of both L-glutamate and L-proline to their cognate tRNAs in a two-step reaction where the amino acid is first activated by ATP to form a covalent intermediate with AMP. Subsequently, the activated amino acid is transferred to the acceptor end of the cognate tRNA to form L-glutamyl-tRNA(Glu) and L-prolyl-tRNA(Pro). This Drosophila melanogaster (Fruit fly) protein is Bifunctional glutamate/proline--tRNA ligase.